The chain runs to 123 residues: MVDLLLIGLGGSIGAILRYTLTKKIGERYQGDWPLATFLINIIGSFGLGLLYGFKLNQVIWLLLGTGFFGGFTTFSTYIYEAIFLMEEGLFWKNVNYLLTSIFTGVVFFAAGMWLANFFKGGV.

The next 4 membrane-spanning stretches (helical) occupy residues 1–21 (MVDLLLIGLGGSIGAILRYTL), 34–54 (PLATFLINIIGSFGLGLLYGF), 59–79 (VIWLLLGTGFFGGFTTFSTYI), and 99–119 (LTSIFTGVVFFAAGMWLANFF). Residues Gly70 and Thr73 each contribute to the Na(+) site.

Belongs to the fluoride channel Fluc/FEX (TC 1.A.43) family.

The protein localises to the cell membrane. The catalysed reaction is fluoride(in) = fluoride(out). Na(+) is not transported, but it plays an essential structural role and its presence is essential for fluoride channel function. Its function is as follows. Fluoride-specific ion channel. Important for reducing fluoride concentration in the cell, thus reducing its toxicity. In Carboxydothermus hydrogenoformans (strain ATCC BAA-161 / DSM 6008 / Z-2901), this protein is Fluoride-specific ion channel FluC 1.